Reading from the N-terminus, the 84-residue chain is Phosphoribosylformylglycinamidine synthase subunit PurS (84 aa).

The protein belongs to the PurS family. In terms of assembly, homodimer. Part of the FGAM synthase complex composed of 1 PurL, 1 PurQ and 2 PurS subunits.

The protein localises to the cytoplasm. The enzyme catalyses N(2)-formyl-N(1)-(5-phospho-beta-D-ribosyl)glycinamide + L-glutamine + ATP + H2O = 2-formamido-N(1)-(5-O-phospho-beta-D-ribosyl)acetamidine + L-glutamate + ADP + phosphate + H(+). The protein operates within purine metabolism; IMP biosynthesis via de novo pathway; 5-amino-1-(5-phospho-D-ribosyl)imidazole from N(2)-formyl-N(1)-(5-phospho-D-ribosyl)glycinamide: step 1/2. In terms of biological role, part of the phosphoribosylformylglycinamidine synthase complex involved in the purines biosynthetic pathway. Catalyzes the ATP-dependent conversion of formylglycinamide ribonucleotide (FGAR) and glutamine to yield formylglycinamidine ribonucleotide (FGAM) and glutamate. The FGAM synthase complex is composed of three subunits. PurQ produces an ammonia molecule by converting glutamine to glutamate. PurL transfers the ammonia molecule to FGAR to form FGAM in an ATP-dependent manner. PurS interacts with PurQ and PurL and is thought to assist in the transfer of the ammonia molecule from PurQ to PurL. The chain is Phosphoribosylformylglycinamidine synthase subunit PurS from Methanothermobacter thermautotrophicus (strain ATCC 29096 / DSM 1053 / JCM 10044 / NBRC 100330 / Delta H) (Methanobacterium thermoautotrophicum).